The chain runs to 217 residues: GTP-binding protein Rit2 (217 aa).

GTP-binding positions include 27–34, 74–78, and 133–136; these read GAGGVGKS, DTAGQ, and NKID.

It belongs to the small GTPase superfamily. Ras family. As to quaternary structure, interacts with AFDN, the C-terminal domain of RALGDS and RLF, but not with RIN1 and PIK3CA. RLF binds exclusively to the active GTP-bound form. Binds calmodulin. Interacts with PLXNB3.

It is found in the nucleus. It localises to the cell membrane. The enzyme catalyses GTP + H2O = GDP + phosphate + H(+). Its activity is regulated as follows. Alternates between an inactive form bound to GDP and an active form bound to GTP. In terms of biological role, binds and exchanges GTP and GDP. The chain is GTP-binding protein Rit2 (Rit2) from Rattus norvegicus (Rat).